The chain runs to 337 residues: Fructose-1,6-bisphosphatase class 1 (337 aa).

Mg(2+)-binding residues include Glu-90, Asp-112, Leu-114, and Asp-115. Residues 115–118 (DGSS), Asn-211, and Lys-277 each bind substrate. Mg(2+) is bound at residue Glu-283.

It belongs to the FBPase class 1 family. In terms of assembly, homotetramer. The cofactor is Mg(2+).

Its subcellular location is the cytoplasm. The enzyme catalyses beta-D-fructose 1,6-bisphosphate + H2O = beta-D-fructose 6-phosphate + phosphate. It functions in the pathway carbohydrate biosynthesis; gluconeogenesis. In Azotobacter vinelandii (strain DJ / ATCC BAA-1303), this protein is Fructose-1,6-bisphosphatase class 1.